The primary structure comprises 187 residues: Large ribosomal subunit protein bL17 (187 aa).

The disordered stretch occupies residues 122–187 (PKVRSSRTST…EADAAEKSDK (66 aa)). Low complexity predominate over residues 127-144 (SRTSTATAPVAAAPVAEA). The span at 145 to 157 (PAEESDVPVEETD) shows a compositional bias: acidic residues. Over residues 167–176 (AETTDAAAAE) the composition is skewed to low complexity.

It belongs to the bacterial ribosomal protein bL17 family. In terms of assembly, part of the 50S ribosomal subunit. Contacts protein L32.

The protein is Large ribosomal subunit protein bL17 of Clavibacter sepedonicus (Clavibacter michiganensis subsp. sepedonicus).